Consider the following 1116-residue polypeptide: Pleckstrin homology domain-containing family A member 5 (1116 aa).

N-acetylalanine is present on Ala-2. The region spanning 10–43 (ISLPRSWTYGITRGGRVFFINEEAKSTTWLHPVT) is the WW 1 domain. Phosphoserine is present on Ser-55. In terms of domain architecture, WW 2 spans 56 to 89 (TDLPTGWEEAYTFEGARYYINHNERKVTCKHPVT). Residues 140-163 (SPVGRTSRASKKVHNFGKRSNSIK) form a disordered region. A compositionally biased stretch (basic residues) spans 147-156 (RASKKVHNFG). One can recognise a PH domain in the interval 169 to 268 (PVVRRGWLYK…WMKAMLDAAL (100 aa)). Lys-301 is covalently cross-linked (Glycyl lysine isopeptide (Lys-Gly) (interchain with G-Cter in SUMO2)). Phosphoserine is present on residues Ser-382 and Ser-410. Thr-438 and Thr-460 each carry phosphothreonine. Positions 459–495 (RTLPRNSKTRPESICSVTPSTHDKTLGPGAEEKRRSM) are disordered. A compositionally biased stretch (basic and acidic residues) spans 479–495 (THDKTLGPGAEEKRRSM). Phosphoserine occurs at positions 568, 607, 809, 855, 933, and 937. Disordered regions lie at residues 928-978 (GASD…PATE) and 1025-1116 (RNKD…FMCV). The segment covering 930-949 (SDQSPLQSPSNLRDNPFRTT) has biased composition (polar residues). Residues 952-978 (RRRDDKELDTAIRENDVKPDHETPATE) are compositionally biased toward basic and acidic residues. Positions 1036–1046 (FSPQDETQTAN) are enriched in polar residues. The span at 1047 to 1061 (HKPEEHPEENTKNSV) shows a compositional bias: basic and acidic residues. The span at 1070–1085 (SYESTPEVSRGNQTMA) shows a compositional bias: polar residues. The span at 1088–1101 (SLSPSPESSASPVP) shows a compositional bias: low complexity.

Highly expressed in heart and kidney.

It localises to the cytoplasm. The sequence is that of Pleckstrin homology domain-containing family A member 5 (PLEKHA5) from Homo sapiens (Human).